The chain runs to 728 residues: 1,4-alpha-glucan branching enzyme GlgB (728 aa).

Residue Asp-405 is the Nucleophile of the active site. Glu-458 (proton donor) is an active-site residue.

Belongs to the glycosyl hydrolase 13 family. GlgB subfamily. As to quaternary structure, monomer.

It catalyses the reaction Transfers a segment of a (1-&gt;4)-alpha-D-glucan chain to a primary hydroxy group in a similar glucan chain.. Its pathway is glycan biosynthesis; glycogen biosynthesis. In terms of biological role, catalyzes the formation of the alpha-1,6-glucosidic linkages in glycogen by scission of a 1,4-alpha-linked oligosaccharide from growing alpha-1,4-glucan chains and the subsequent attachment of the oligosaccharide to the alpha-1,6 position. The polypeptide is 1,4-alpha-glucan branching enzyme GlgB (Shigella boydii serotype 4 (strain Sb227)).